Consider the following 707-residue polypeptide: Metal transporter CNNM3 (707 aa).

Residues 11-27 (LGWLFAALCLGNAAGEA) form a helical membrane-spanning segment. The N-linked (GlcNAc...) asparagine glycan is linked to asparagine 73. The 179-residue stretch at 130–308 (EAAPPWALGL…DPYSDLSKGV (179 aa)) folds into the CNNM transmembrane domain. 3 consecutive transmembrane segments (helical) span residues 193 to 213 (CALG…AVLL), 221 to 241 (AVPA…VVPA), and 261 to 281 (LAVL…ELAA). 2 CBS domains span residues 318 to 379 (LTPL…CTPL) and 386 to 452 (YNHP…ILDE). Serine 661 is modified (phosphoserine). A compositionally biased stretch (polar residues) spans 678-691 (LGEKTTTAAGSSHS). Residues 678–707 (LGEKTTTAAGSSHSRPGVPVEGSPGRNPGV) are disordered. The residue at position 700 (serine 700) is a Phosphoserine.

This sequence belongs to the ACDP family. Widely expressed. Expressed at higher level in heart and spleen.

It is found in the cell membrane. Probable metal transporter. This chain is Metal transporter CNNM3 (CNNM3), found in Homo sapiens (Human).